The sequence spans 327 residues: Methionine import ATP-binding protein MetN (327 aa).

One can recognise an ABC transporter domain in the interval 3 to 239 (VELKNIEKIY…PKHAVTKELI (237 aa)). ATP is bound at residue 36–43 (GYSGAGKS).

It belongs to the ABC transporter superfamily. Methionine importer (TC 3.A.1.24) family. The complex is composed of two ATP-binding proteins (MetN), two transmembrane proteins (MetI) and a solute-binding protein (MetQ).

The protein localises to the cell inner membrane. It catalyses the reaction L-methionine(out) + ATP + H2O = L-methionine(in) + ADP + phosphate + H(+). The catalysed reaction is D-methionine(out) + ATP + H2O = D-methionine(in) + ADP + phosphate + H(+). Its function is as follows. Part of the ABC transporter complex MetNIQ involved in methionine import. Responsible for energy coupling to the transport system. The polypeptide is Methionine import ATP-binding protein MetN (Helicobacter acinonychis (strain Sheeba)).